Consider the following 67-residue polypeptide: Probable Sec-independent protein translocase protein TatE (67 aa).

The chain crosses the membrane as a helical span at residues 4–21 (ISITKLLVVAALVVLLFG). A disordered region spans residues 46-67 (EDAGAKKEAGGDIQAEKLSHKE).

It belongs to the TatA/E family. TatE subfamily.

The protein localises to the cell inner membrane. Part of the twin-arginine translocation (Tat) system that transports large folded proteins containing a characteristic twin-arginine motif in their signal peptide across membranes. TatE shares overlapping functions with TatA. This chain is Probable Sec-independent protein translocase protein TatE, found in Citrobacter koseri (strain ATCC BAA-895 / CDC 4225-83 / SGSC4696).